The following is a 549-amino-acid chain: MEEVAPEQVQEVQGNTEAHIDSTTASTAPTEALPSDKQSRKANEIDSMADGAPAEKKQKTDQRQIIREPKLDDNGNPIPREPRLPKRKVAVMIGYCGTGYHGMQYNPPNPTIEAALFKAFVDAGAISKANSNDLKKNNFMRAARTDKGVHAGGNLISLKMIIEDPEIMDKINANLPEGIRIWDIERVNKAFDCRKMCSSRWYEYLLPTYSLIGPKPGTILNNDIESSKTELPGVLDEDLESKEFWENFEAAAKKEFTPEEIAAIKDYSPPPREEFDDQEELYQKVKQWKLLENTHRRQYRISEMKLNKFRAAMNQYLGAHNFHNFTLGKEFKDPSAIRFMKEIKVSDPFVIGDAKAEWVSIKIHGQSFMLHQIRKMISMATLIARCGTPVERISQAFGPQKINIPKAPALGLLLEAPVFESYNKRLEKFGYKPIDFSKYQEKVDAFKMKHIYDKIYAEEVSDNVFNAFFSYIDSFNKVTGAQTEESAESNKPATKSIFEFLSAHGIPGIDYGKNEKEDSNKESSNDQVNKESAPATSKPAEAVEQTEKN.

Residues 1 to 13 (MEEVAPEQVQEVQ) are compositionally biased toward low complexity. The interval 1-83 (MEEVAPEQVQ…NGNPIPREPR (83 aa)) is disordered. Positions 53–73 (PAEKKQKTDQRQIIREPKLDD) are enriched in basic and acidic residues. Catalysis depends on Asp-146, which acts as the Nucleophile. The interval 507–549 (PGIDYGKNEKEDSNKESSNDQVNKESAPATSKPAEAVEQTEKN) is disordered. Positions 512 to 524 (GKNEKEDSNKESS) are enriched in basic and acidic residues.

This sequence belongs to the tRNA pseudouridine synthase TruA family. It depends on Zn(2+) as a cofactor.

It localises to the nucleus. It carries out the reaction a uridine in tRNA = a pseudouridine in tRNA. It catalyses the reaction uridine in snRNA = pseudouridine in snRNA. The catalysed reaction is a uridine in mRNA = a pseudouridine in mRNA. In terms of biological role, formation of pseudouridine at positions 27 and 28 in the anticodon stem and loop of transfer RNAs; at positions 34 and 36 of intron-containing precursor tRNA(Ile) and at position 35 in the intron-containing tRNA(Tyr). Catalyzes pseudouridylation at position 44 in U2 snRNA. Also catalyzes pseudouridylation of mRNAs. The polypeptide is tRNA pseudouridine synthase 1 (PUS1) (Candida glabrata (strain ATCC 2001 / BCRC 20586 / JCM 3761 / NBRC 0622 / NRRL Y-65 / CBS 138) (Yeast)).